We begin with the raw amino-acid sequence, 308 residues long: Homeobox protein HMX3 (308 aa).

2 disordered regions span residues 1 to 57 (MPET…GFAL) and 107 to 184 (AEKS…KKKT). Positions 9 to 19 (PSAPPPPPPPK) are enriched in pro residues. Composition is skewed to basic and acidic residues over residues 135 to 144 (AEQKERDPKS) and 156 to 177 (EEGKKEGGAEDWKKREESPEKK). Positions 181–240 (KKKTRTVFSRSQVFQLESTFDMKRYLSSSERAGLAASLHLTETQVKIWFQNRRNKWKRQL) form a DNA-binding region, homeobox.

The protein belongs to the HMX homeobox family.

It is found in the nucleus. In terms of biological role, transcription factor involved in specification of neuronal cell types and which is required for inner ear and hypothalamus development. Binds to the 5'-CAAGTG-3' core sequence. This is Homeobox protein HMX3 (HMX3) from Gallus gallus (Chicken).